A 1060-amino-acid polypeptide reads, in one-letter code: FACT complex subunit SPT16 (1060 aa).

The segment at 458-490 (FNDDNETQKENNNNNNKRPGLSQTSNTTALKLE) is disordered. Over residues 478–490 (LSQTSNTTALKLE) the composition is skewed to polar residues. Residues 508–532 (NADDANSEKLRQEIQIKLHEKRLQE) are a coiled coil. Residues 977-1060 (QGESDEEEES…AKADRNSGFD (84 aa)) form a disordered region. Acidic residues-rich tracts occupy residues 979–990 (ESDEEEESDEES) and 997–1044 (EDPQ…EDWD). Over residues 1045 to 1060 (ALERKAAKADRNSGFD) the composition is skewed to basic and acidic residues.

It belongs to the peptidase M24 family. SPT16 subfamily. Forms a stable heterodimer with POB3. The SPT16-POB3 dimer weakly associates with multiple molecules of NHP6 to form the FACT complex.

It is found in the nucleus. The protein resides in the chromosome. In terms of biological role, component of the FACT complex, a general chromatin factor that acts to reorganize nucleosomes. The FACT complex is involved in multiple processes that require DNA as a template such as mRNA elongation, DNA replication and DNA repair. During transcription elongation the FACT complex acts as a histone chaperone that both destabilizes and restores nucleosomal structure. It facilitates the passage of RNA polymerase II and transcription by promoting the dissociation of one histone H2A-H2B dimer from the nucleosome, then subsequently promotes the reestablishment of the nucleosome following the passage of RNA polymerase II. This is FACT complex subunit SPT16 (CDC68) from Candida albicans (strain SC5314 / ATCC MYA-2876) (Yeast).